Consider the following 25-residue polypeptide: Oxyopinin-3c (25 aa).

Expressed by the venom gland.

It is found in the secreted. May have cytolytic and antimicrobial activity. This is Oxyopinin-3c from Oxyopes takobius (Lynx spider).